The following is a 262-amino-acid chain: Ribose-5-phosphate isomerase A (262 aa).

Substrate-binding positions include 33–36 (TGST), 89–92 (DGAD), and 102–105 (KGGG). Glu111 functions as the Proton acceptor in the catalytic mechanism. Lys129 contacts substrate.

This sequence belongs to the ribose 5-phosphate isomerase family. As to quaternary structure, homodimer.

The enzyme catalyses aldehydo-D-ribose 5-phosphate = D-ribulose 5-phosphate. Its pathway is carbohydrate degradation; pentose phosphate pathway; D-ribose 5-phosphate from D-ribulose 5-phosphate (non-oxidative stage): step 1/1. In terms of biological role, catalyzes the reversible conversion of ribose-5-phosphate to ribulose 5-phosphate. The sequence is that of Ribose-5-phosphate isomerase A from Cereibacter sphaeroides (strain ATCC 17023 / DSM 158 / JCM 6121 / CCUG 31486 / LMG 2827 / NBRC 12203 / NCIMB 8253 / ATH 2.4.1.) (Rhodobacter sphaeroides).